We begin with the raw amino-acid sequence, 463 residues long: Aromatic amino acid transport protein AroP (463 aa).

12 helical membrane passes run 18–38, 40–60, 84–104, 117–137, 157–177, 200–220, 237–257, 276–296, 337–357, 358–378, 402–422, and 431–451; these read TMMG…GVGI, AAGP…VLVM, FGHW…IMVM, AWFG…FAVV, VAVI…WLPG, VAAG…VTIA, AVIW…TFLM, ILAM…IVLA, AVLL…WNPA, GLLD…WAMI, AHPW…ALML, and VYSV…TVNS.

This sequence belongs to the amino acid-polyamine-organocation (APC) superfamily. Amino acid transporter (AAT) (TC 2.A.3.1) family.

It is found in the cell membrane. The catalysed reaction is L-phenylalanine(in) + H(+)(in) = L-phenylalanine(out) + H(+)(out). It carries out the reaction L-tryptophan(in) + H(+)(in) = L-tryptophan(out) + H(+)(out). The enzyme catalyses L-tyrosine(in) + H(+)(in) = L-tyrosine(out) + H(+)(out). In terms of biological role, permease that is involved in the active transport across the cytoplasmic membrane of all three aromatic amino acids, phenylalanine, tyrosine and tryptophan. The polypeptide is Aromatic amino acid transport protein AroP (Corynebacterium glutamicum (strain ATCC 13032 / DSM 20300 / JCM 1318 / BCRC 11384 / CCUG 27702 / LMG 3730 / NBRC 12168 / NCIMB 10025 / NRRL B-2784 / 534)).